The primary structure comprises 132 residues: Phosphoribosyl-AMP cyclohydrolase (132 aa).

Aspartate 85 contacts Mg(2+). Cysteine 86 contacts Zn(2+). Residues aspartate 87 and aspartate 89 each contribute to the Mg(2+) site. Zn(2+) is bound by residues cysteine 102 and cysteine 109.

Belongs to the PRA-CH family. As to quaternary structure, homodimer. It depends on Mg(2+) as a cofactor. Zn(2+) serves as cofactor.

Its subcellular location is the cytoplasm. It carries out the reaction 1-(5-phospho-beta-D-ribosyl)-5'-AMP + H2O = 1-(5-phospho-beta-D-ribosyl)-5-[(5-phospho-beta-D-ribosylamino)methylideneamino]imidazole-4-carboxamide. It participates in amino-acid biosynthesis; L-histidine biosynthesis; L-histidine from 5-phospho-alpha-D-ribose 1-diphosphate: step 3/9. In terms of biological role, catalyzes the hydrolysis of the adenine ring of phosphoribosyl-AMP. This Frankia alni (strain DSM 45986 / CECT 9034 / ACN14a) protein is Phosphoribosyl-AMP cyclohydrolase.